The sequence spans 117 residues: Photosystem II reaction center Psb28 protein (117 aa).

Belongs to the Psb28 family. As to quaternary structure, part of the photosystem II complex.

It is found in the cellular thylakoid membrane. In Prochlorococcus marinus (strain MIT 9215), this protein is Photosystem II reaction center Psb28 protein.